The primary structure comprises 761 residues: 1,4-alpha-glucan branching enzyme GlgB (761 aa).

Aspartate 431 functions as the Nucleophile in the catalytic mechanism. The active-site Proton donor is the glutamate 484.

It belongs to the glycosyl hydrolase 13 family. GlgB subfamily. In terms of assembly, monomer.

It carries out the reaction Transfers a segment of a (1-&gt;4)-alpha-D-glucan chain to a primary hydroxy group in a similar glucan chain.. It functions in the pathway glycan biosynthesis; glycogen biosynthesis. In terms of biological role, catalyzes the formation of the alpha-1,6-glucosidic linkages in glycogen by scission of a 1,4-alpha-linked oligosaccharide from growing alpha-1,4-glucan chains and the subsequent attachment of the oligosaccharide to the alpha-1,6 position. This Synechococcus sp. (strain WH7803) protein is 1,4-alpha-glucan branching enzyme GlgB.